Here is a 261-residue protein sequence, read N- to C-terminus: MTHQTHAYHMVNPSPWPLTGALSALLLTSGLIMWFHFNSFLLVIIGLTCMLLTMYQWWRDIVREGTFQGHHTPVVQKGLRYGMVLFIVSEVFFFLGFFWAFYHSSLAPTPELGGCWPPTGIHPLNPLEVPLLNTSILLASGVSITWAHHSLMEGNRKQMIQALSITILLGIYFTILQASEYYESSFTISDGVYGSTFFVATGFHGLHVIIGTTFLIVCLLRQFNFHFTSTHHFGFEAAAWYWHFVDVVWLFLYVSIYWWGS.

Topologically, residues 1–15 are mitochondrial matrix; the sequence is MTHQTHAYHMVNPSP. Residues 16–34 traverse the membrane as a helical segment; the sequence is WPLTGALSALLLTSGLIMW. At 35–40 the chain is on the mitochondrial intermembrane side; sequence FHFNSF. Residues 41-66 form a helical membrane-spanning segment; the sequence is LLVIIGLTCMLLTMYQWWRDIVREGT. At 67-72 the chain is on the mitochondrial matrix side; that stretch reads FQGHHT. A helical membrane pass occupies residues 73–105; it reads PVVQKGLRYGMVLFIVSEVFFFLGFFWAFYHSS. Residues 106–128 are Mitochondrial intermembrane-facing; the sequence is LAPTPELGGCWPPTGIHPLNPLE. A helical transmembrane segment spans residues 129–152; sequence VPLLNTSILLASGVSITWAHHSLM. Residues 153–155 are Mitochondrial matrix-facing; sequence EGN. A helical transmembrane segment spans residues 156–183; sequence RKQMIQALSITILLGIYFTILQASEYYE. Residues 184 to 190 lie on the Mitochondrial intermembrane side of the membrane; sequence SSFTISD. A helical transmembrane segment spans residues 191–223; it reads GVYGSTFFVATGFHGLHVIIGTTFLIVCLLRQF. Residues 224–232 are Mitochondrial matrix-facing; it reads NFHFTSTHH. A helical membrane pass occupies residues 233 to 256; the sequence is FGFEAAAWYWHFVDVVWLFLYVSI. The Mitochondrial intermembrane segment spans residues 257 to 261; it reads YWWGS.

The protein belongs to the cytochrome c oxidase subunit 3 family. In terms of assembly, component of the cytochrome c oxidase (complex IV, CIV), a multisubunit enzyme composed of 14 subunits. The complex is composed of a catalytic core of 3 subunits MT-CO1, MT-CO2 and MT-CO3, encoded in the mitochondrial DNA, and 11 supernumerary subunits COX4I, COX5A, COX5B, COX6A, COX6B, COX6C, COX7A, COX7B, COX7C, COX8 and NDUFA4, which are encoded in the nuclear genome. The complex exists as a monomer or a dimer and forms supercomplexes (SCs) in the inner mitochondrial membrane with NADH-ubiquinone oxidoreductase (complex I, CI) and ubiquinol-cytochrome c oxidoreductase (cytochrome b-c1 complex, complex III, CIII), resulting in different assemblies (supercomplex SCI(1)III(2)IV(1) and megacomplex MCI(2)III(2)IV(2)).

Its subcellular location is the mitochondrion inner membrane. It catalyses the reaction 4 Fe(II)-[cytochrome c] + O2 + 8 H(+)(in) = 4 Fe(III)-[cytochrome c] + 2 H2O + 4 H(+)(out). Its function is as follows. Component of the cytochrome c oxidase, the last enzyme in the mitochondrial electron transport chain which drives oxidative phosphorylation. The respiratory chain contains 3 multisubunit complexes succinate dehydrogenase (complex II, CII), ubiquinol-cytochrome c oxidoreductase (cytochrome b-c1 complex, complex III, CIII) and cytochrome c oxidase (complex IV, CIV), that cooperate to transfer electrons derived from NADH and succinate to molecular oxygen, creating an electrochemical gradient over the inner membrane that drives transmembrane transport and the ATP synthase. Cytochrome c oxidase is the component of the respiratory chain that catalyzes the reduction of oxygen to water. Electrons originating from reduced cytochrome c in the intermembrane space (IMS) are transferred via the dinuclear copper A center (CU(A)) of subunit 2 and heme A of subunit 1 to the active site in subunit 1, a binuclear center (BNC) formed by heme A3 and copper B (CU(B)). The BNC reduces molecular oxygen to 2 water molecules using 4 electrons from cytochrome c in the IMS and 4 protons from the mitochondrial matrix. This chain is Cytochrome c oxidase subunit 3 (MT-CO3), found in Osphranter robustus (Wallaroo).